Reading from the N-terminus, the 274-residue chain is Cytochrome b-c1 complex subunit Rieske, mitochondrial (274 aa).

Topologically, residues serine 79 to arginine 110 are mitochondrial matrix. The helical transmembrane segment at lysine 111 to valine 137 threads the bilayer. At serine 138 to glycine 274 the chain is on the mitochondrial intermembrane side. In terms of domain architecture, Rieske spans glutamate 187–valine 272. Cysteine 217, histidine 219, cysteine 236, histidine 239, and serine 241 together coordinate [2Fe-2S] cluster. A disulfide bridge links cysteine 222 with cysteine 238.

This sequence belongs to the Rieske iron-sulfur protein family. As to quaternary structure, component of the ubiquinol-cytochrome c oxidoreductase (cytochrome b-c1 complex, complex III, CIII), a multisubunit enzyme composed of 11 subunits. The complex is composed of 3 respiratory subunits cytochrome b, cytochrome c1 and Rieske protein UQCRFS1, 2 core protein subunits UQCRC1/QCR1 and UQCRC2/QCR2, and 6 low-molecular weight protein subunits UQCRH/QCR6, UQCRB/QCR7, UQCRQ/QCR8, UQCR10/QCR9, UQCR11/QCR10 and subunit 9, the cleavage product of Rieske protein UQCRFS1. The complex exists as an obligatory dimer and forms supercomplexes (SCs) in the inner mitochondrial membrane with NADH-ubiquinone oxidoreductase (complex I, CI) and cytochrome c oxidase (complex IV, CIV), resulting in different assemblies (supercomplex SCI(1)III(2)IV(1) and megacomplex MCI(2)III(2)IV(2)). Incorporation of the Rieske protein UQCRFS1 is the penultimate step in complex III assembly. Interacts with TTC19, which is involved in the clearance of UQCRFS1 fragments. Component of the ubiquinol-cytochrome c oxidoreductase (cytochrome b-c1 complex, complex III, CIII). Subunit 9 corresponds to the mitochondrial targeting sequence (MTS) of Rieske protein UQCRFS1. It is retained after processing and incorporated inside complex III, where it remains bound to the complex and localizes between the 2 core subunits UQCRC1/QCR1 and UQCRC2/QCR2. [2Fe-2S] cluster serves as cofactor. Post-translationally, proteolytic processing is necessary for the correct insertion of UQCRFS1 in the complex III dimer. Several fragments are generated during UQCRFS1 insertion, most probably due to the endogenous matrix-processing peptidase (MPP) activity of the 2 core protein subunits UQCRC1/QCR1 and UQCRC2/QCR2, which are homologous to the 2 mitochondrial-processing peptidase (MPP) subunits beta-MPP and alpha-MPP respectively. The action of the protease is also necessary for the clearance of the UQCRFS1 fragments.

The protein localises to the mitochondrion inner membrane. It catalyses the reaction a quinol + 2 Fe(III)-[cytochrome c](out) = a quinone + 2 Fe(II)-[cytochrome c](out) + 2 H(+)(out). Its function is as follows. Component of the ubiquinol-cytochrome c oxidoreductase, a multisubunit transmembrane complex that is part of the mitochondrial electron transport chain which drives oxidative phosphorylation. The respiratory chain contains 3 multisubunit complexes succinate dehydrogenase (complex II, CII), ubiquinol-cytochrome c oxidoreductase (cytochrome b-c1 complex, complex III, CIII) and cytochrome c oxidase (complex IV, CIV), that cooperate to transfer electrons derived from NADH and succinate to molecular oxygen, creating an electrochemical gradient over the inner membrane that drives transmembrane transport and the ATP synthase. The cytochrome b-c1 complex catalyzes electron transfer from ubiquinol to cytochrome c, linking this redox reaction to translocation of protons across the mitochondrial inner membrane, with protons being carried across the membrane as hydrogens on the quinol. In the process called Q cycle, 2 protons are consumed from the matrix, 4 protons are released into the intermembrane space and 2 electrons are passed to cytochrome c. The Rieske protein is a catalytic core subunit containing a [2Fe-2S] iron-sulfur cluster. It cycles between 2 conformational states during catalysis to transfer electrons from the quinol bound in the Q(0) site in cytochrome b to cytochrome c1. Incorporation of UQCRFS1 is the penultimate step in complex III assembly. Component of the ubiquinol-cytochrome c oxidoreductase (cytochrome b-c1 complex, complex III, CIII). UQCRFS1 undergoes proteolytic processing once it is incorporated in the complex III dimer. One of the fragments, called subunit 9, corresponds to its mitochondrial targeting sequence (MTS). The proteolytic processing is necessary for the correct insertion of UQCRFS1 in the complex III dimer, but the persistence of UQCRFS1-derived fragments may prevent newly imported UQCRFS1 to be processed and assembled into complex III and is detrimental for the complex III structure and function. The sequence is that of Cytochrome b-c1 complex subunit Rieske, mitochondrial from Mus musculus (Mouse).